The sequence spans 95 residues: Small ribosomal subunit protein bS20c (95 aa).

The interval 76–95 (NGSAKKAKLTKRLKEKKISL) is disordered. Residues 80-95 (KKAKLTKRLKEKKISL) show a composition bias toward basic residues.

Belongs to the bacterial ribosomal protein bS20 family.

It localises to the plastid. The protein localises to the chloroplast. Binds directly to 16S ribosomal RNA. The polypeptide is Small ribosomal subunit protein bS20c (Guillardia theta (Cryptophyte)).